Reading from the N-terminus, the 234-residue chain is Uridylate kinase (234 aa).

An ATP-binding site is contributed by 9–12; sequence KLSG. Gly51 lines the UMP pocket. Positions 52 and 56 each coordinate ATP. Residues Asp71 and 132–139 contribute to the UMP site; that span reads CGNPFFTT. Positions 159, 165, and 168 each coordinate ATP.

The protein belongs to the UMP kinase family. In terms of assembly, homohexamer.

It localises to the cytoplasm. The catalysed reaction is UMP + ATP = UDP + ADP. It participates in pyrimidine metabolism; CTP biosynthesis via de novo pathway; UDP from UMP (UMPK route): step 1/1. Inhibited by UTP. In terms of biological role, catalyzes the reversible phosphorylation of UMP to UDP. This chain is Uridylate kinase, found in Prochlorococcus marinus subsp. pastoris (strain CCMP1986 / NIES-2087 / MED4).